The primary structure comprises 240 residues: Putative exosome complex component RRP41 (240 aa).

Belongs to the RNase PH family. Component of the RNA exosome complex.

It localises to the cytoplasm. The protein localises to the nucleus. The protein resides in the nucleolus. Its subcellular location is the nucleoplasm. Non-catalytic component of the RNA exosome complex which has 3'-&gt;5' exoribonuclease activity and participates in a multitude of cellular RNA processing and degradation events. This chain is Putative exosome complex component RRP41 (exos-4.1), found in Caenorhabditis elegans.